The following is a 486-amino-acid chain: Probable cytosol aminopeptidase (486 aa).

The protein belongs to the peptidase M17 family. Mn(2+) is required as a cofactor.

Its subcellular location is the cytoplasm. It carries out the reaction Release of an N-terminal amino acid, Xaa-|-Yaa-, in which Xaa is preferably Leu, but may be other amino acids including Pro although not Arg or Lys, and Yaa may be Pro. Amino acid amides and methyl esters are also readily hydrolyzed, but rates on arylamides are exceedingly low.. It catalyses the reaction Release of an N-terminal amino acid, preferentially leucine, but not glutamic or aspartic acids.. Presumably involved in the processing and regular turnover of intracellular proteins. Catalyzes the removal of unsubstituted N-terminal amino acids from various peptides. The sequence is that of Probable cytosol aminopeptidase (pepA) from Synechococcus elongatus (strain ATCC 33912 / PCC 7942 / FACHB-805) (Anacystis nidulans R2).